We begin with the raw amino-acid sequence, 515 residues long: Bifunctional purine biosynthesis protein PurH (515 aa).

The MGS-like domain occupies 1 to 145 (MTKRALISVS…KNHASVTVVV (145 aa)).

It belongs to the PurH family.

The catalysed reaction is (6R)-10-formyltetrahydrofolate + 5-amino-1-(5-phospho-beta-D-ribosyl)imidazole-4-carboxamide = 5-formamido-1-(5-phospho-D-ribosyl)imidazole-4-carboxamide + (6S)-5,6,7,8-tetrahydrofolate. It catalyses the reaction IMP + H2O = 5-formamido-1-(5-phospho-D-ribosyl)imidazole-4-carboxamide. It functions in the pathway purine metabolism; IMP biosynthesis via de novo pathway; 5-formamido-1-(5-phospho-D-ribosyl)imidazole-4-carboxamide from 5-amino-1-(5-phospho-D-ribosyl)imidazole-4-carboxamide (10-formyl THF route): step 1/1. Its pathway is purine metabolism; IMP biosynthesis via de novo pathway; IMP from 5-formamido-1-(5-phospho-D-ribosyl)imidazole-4-carboxamide: step 1/1. The chain is Bifunctional purine biosynthesis protein PurH from Streptococcus agalactiae serotype III (strain NEM316).